The primary structure comprises 160 residues: Cyclic pyranopterin monophosphate synthase (160 aa).

Substrate is bound by residues methionine 77–histidine 79 and methionine 114–glutamate 115. The active site involves aspartate 129.

Belongs to the MoaC family. Homohexamer; trimer of dimers.

It catalyses the reaction (8S)-3',8-cyclo-7,8-dihydroguanosine 5'-triphosphate = cyclic pyranopterin phosphate + diphosphate. It functions in the pathway cofactor biosynthesis; molybdopterin biosynthesis. In terms of biological role, catalyzes the conversion of (8S)-3',8-cyclo-7,8-dihydroguanosine 5'-triphosphate to cyclic pyranopterin monophosphate (cPMP). The chain is Cyclic pyranopterin monophosphate synthase from Listeria welshimeri serovar 6b (strain ATCC 35897 / DSM 20650 / CCUG 15529 / CIP 8149 / NCTC 11857 / SLCC 5334 / V8).